The primary structure comprises 367 residues: 3-ketodihydrosphingosine reductase ksrA (367 aa).

The chain crosses the membrane as a helical span at residues 12–32 (ASPATLGISLILCGFIVYSVS). NADPH is bound by residues G53, S55, G57, R78, K82, D108, and L109. Residues 53–57 (GGSDG) carry the GXSXG motif. A helical membrane pass occupies residues 193–213 (LIFTCSTLAFVSIAGYAPYSP). Residue Y211 is the Proton acceptor of the active site. NADP(+) contacts are provided by Y211, K215, and I259. K215 serves as the catalytic Lowers pKa of active site Tyr.

Belongs to the short-chain dehydrogenases/reductases (SDR) family.

The protein localises to the endoplasmic reticulum membrane. It carries out the reaction sphinganine + NADP(+) = 3-oxosphinganine + NADPH + H(+). Its pathway is lipid metabolism; sphingolipid metabolism. Functionally, catalyzes the reduction of 3'-oxosphinganine (3-ketodihydrosphingosine/KDS) to sphinganine (dihydrosphingosine/DHS), the second step of de novo sphingolipid biosynthesis. This chain is 3-ketodihydrosphingosine reductase ksrA, found in Aspergillus fumigatus (strain ATCC MYA-4609 / CBS 101355 / FGSC A1100 / Af293) (Neosartorya fumigata).